Reading from the N-terminus, the 550-residue chain is Protein UshA (550 aa).

Residues 1–25 (MRFSLSTTAAALAVSLAFAPGWAVA) form the signal peptide. Aspartate 41, histidine 43, aspartate 84, asparagine 116, histidine 217, histidine 252, and glutamine 254 together coordinate a divalent metal cation. An intrachain disulfide couples cysteine 258 to cysteine 275. Substrate contacts are provided by residues 375–379 (RSKVR) and 498–504 (FNALGGD).

Belongs to the 5'-nucleotidase family. It depends on Co(2+) as a cofactor.

It is found in the periplasm. The enzyme catalyses UDP-sugar + H2O = UMP + alpha-D-aldose 1-phosphate.. The catalysed reaction is a ribonucleoside 5'-phosphate + H2O = a ribonucleoside + phosphate. Degradation of external UDP-glucose to uridine monophosphate and glucose-1-phosphate, which can then be used by the cell. In Yersinia enterocolitica serotype O:8 / biotype 1B (strain NCTC 13174 / 8081), this protein is Protein UshA (ushA).